Here is a 219-residue protein sequence, read N- to C-terminus: Albonoursin synthase (219 aa).

The protein belongs to the nitroreductase family. In terms of assembly, homomer. The cofactor is FMN. Post-translationally, the N-terminus is blocked.

The protein localises to the cytoplasm. The enzyme catalyses cyclo(L-phenylalanyl-L-leucyl) + 2 O2 = albonoursin + 2 H2O2. Involved in the biosynthesis of albonoursin (cyclo[(alpha,beta-dehydro-Phe)-(alpha,beta-dehydro-Leu)]), an antibacterial peptide. Catalyzes the formation of alpha,beta-dehydro-Phe (DPhe) and alpha,beta-dehydro-Leu (DLeu) residues during the biosynthesis of albonoursin. The catalytic reaction of cyclo(L-Phe-L-Leu) occurs in a two-step sequential alpha-beta-dehydrogenation leading first to cyclo(alpha,beta-dehydro-Phe-L-Leu) and finally to albonoursin. Can also use cyclo(L-Phe-L-His), cyclo(L-Trp-L-Trp), cyclo(L-Leu-L-Ala), cyclo(L-Phe-Gly), cyclo(L-Leu-Gly), cyclo(L-Ser-Gly) and cyclo(L-Glu-Gly) as substrate suggesting that the diketopiperazine ring is essential for the enzymatic reaction. This chain is Albonoursin synthase (albA), found in Streptomyces noursei (Streptomyces albulus).